The following is a 235-amino-acid chain: tRNA pseudouridine synthase B (235 aa).

Asp-45 (nucleophile) is an active-site residue.

The protein belongs to the pseudouridine synthase TruB family. Type 1 subfamily.

It carries out the reaction uridine(55) in tRNA = pseudouridine(55) in tRNA. Functionally, responsible for synthesis of pseudouridine from uracil-55 in the psi GC loop of transfer RNAs. The polypeptide is tRNA pseudouridine synthase B (Chlamydia abortus (strain DSM 27085 / S26/3) (Chlamydophila abortus)).